A 225-amino-acid polypeptide reads, in one-letter code: UPF0758 protein Swoo_4561 (225 aa).

The 123-residue stretch at Ile102–Ile224 folds into the MPN domain. His173, His175, and Asp186 together coordinate Zn(2+). The short motif at His173–Asp186 is the JAMM motif element.

It belongs to the UPF0758 family.

In Shewanella woodyi (strain ATCC 51908 / MS32), this protein is UPF0758 protein Swoo_4561.